The following is a 504-amino-acid chain: UDP-N-acetylglucosamine--peptide N-acetylglucosaminyltransferase GtfA subunit (504 aa).

16–19 (GVEY) contributes to the UDP binding site. His243 contributes to the N-acetyl-D-glucosamine binding site. 385-386 (HK) is a binding site for UDP. 405-408 (EGFG) contacts N-acetyl-D-glucosamine.

It belongs to the glycosyltransferase group 1 family. Glycosyltransferase 4 subfamily. As to quaternary structure, interacts with stabilizing protein GtfB (Gtf1), probably via the N-terminus of this protein; probably forms a heterotetramer with 2 subunits each of GtfA and GtfB. Part of the accessory SecA2/SecY2 protein translocation apparatus.

It is found in the cytoplasm. The protein resides in the cell membrane. The catalysed reaction is L-seryl-[protein] + UDP-N-acetyl-alpha-D-glucosamine = 3-O-[N-acetyl-alpha-D-glucosaminyl]-L-seryl-[protein] + UDP + H(+). It participates in protein modification; protein glycosylation. Functionally, required for polymorphic O-glycosylation of serine-rich repeat protein Fap1. Catalyzes the first step in glycosylation by transferring N-acetylglucosamine from UDP-GlcNAc to serine residues in Fap1. Part of the accessory SecA2/SecY2 system specifically required to export Fap1, a serine-rich fimbrial adhesin encoded upstream in the same operon. The GtfA-GtfB (Gtf1-Gtf2 in this bacteria) complex adds GlcNAc from UDP-GlcNAc to Fap1, attaching the first sugar residue. Cannot use not UDP-Glc as substrate. This subunit has very low glycosyltransferase activity; the GtfB stabilizing protein enhances membrane association, protease resistance and glycosyltransferase activity. The sequence is that of UDP-N-acetylglucosamine--peptide N-acetylglucosaminyltransferase GtfA subunit from Streptococcus parasanguinis.